The chain runs to 61 residues: Beta-toxin Tce4 (61 aa).

The region spanning 1-61 (KEGYLMDHEG…KVWEYATNRC (61 aa)) is the LCN-type CS-alpha/beta domain. 4 disulfide bridges follow: cysteine 11–cysteine 61, cysteine 15–cysteine 37, cysteine 23–cysteine 42, and cysteine 27–cysteine 44. A Cysteine amide modification is found at cysteine 61.

Belongs to the long (4 C-C) scorpion toxin superfamily. Sodium channel inhibitor family. Beta subfamily. As to expression, expressed by the venom gland.

It is found in the secreted. In terms of biological role, beta toxins bind voltage-independently at site-4 of sodium channels (Nav) and shift the voltage of activation toward more negative potentials thereby affecting sodium channel activation and promoting spontaneous and repetitive firing. The polypeptide is Beta-toxin Tce4 (Tityus cerroazul (Scorpion)).